We begin with the raw amino-acid sequence, 279 residues long: uncharacterized protein (279 aa).

The GIY-YIG domain occupies 2–90 (KIGYIYAIEN…IRDYGSLNTI (89 aa)).

The protein belongs to the IIV-6 019R family.

This is an uncharacterized protein from Acheta domesticus (House cricket).